The following is a 341-amino-acid chain: Methionine import ATP-binding protein MetN (341 aa).

The ABC transporter domain occupies 9–247 (ISVQDVSKKL…SENSITNELF (239 aa)). Residue 41–48 (GHSGSGKT) coordinates ATP.

It belongs to the ABC transporter superfamily. Methionine importer (TC 3.A.1.24) family. The complex is composed of two ATP-binding proteins (MetN), two transmembrane proteins (MetI) and a solute-binding protein (MetQ).

The protein resides in the cell inner membrane. The enzyme catalyses L-methionine(out) + ATP + H2O = L-methionine(in) + ADP + phosphate + H(+). It catalyses the reaction D-methionine(out) + ATP + H2O = D-methionine(in) + ADP + phosphate + H(+). Part of the ABC transporter complex MetNIQ involved in methionine import. Responsible for energy coupling to the transport system. This Chlamydia pneumoniae (Chlamydophila pneumoniae) protein is Methionine import ATP-binding protein MetN.